Here is a 188-residue protein sequence, read N- to C-terminus: Elongation factor P (188 aa).

Belongs to the elongation factor P family.

It localises to the cytoplasm. The protein operates within protein biosynthesis; polypeptide chain elongation. Its function is as follows. Involved in peptide bond synthesis. Stimulates efficient translation and peptide-bond synthesis on native or reconstituted 70S ribosomes in vitro. Probably functions indirectly by altering the affinity of the ribosome for aminoacyl-tRNA, thus increasing their reactivity as acceptors for peptidyl transferase. This chain is Elongation factor P (efp), found in Rickettsia prowazekii (strain Madrid E).